A 173-amino-acid chain; its full sequence is Mesencephalic astrocyte-derived neurotrophic factor homolog (173 aa).

A signal peptide spans 1 to 22; sequence MKTAHLVVVVCFLAGALQTAVA. Disulfide bonds link Cys-28-Cys-114, Cys-31-Cys-103, Cys-61-Cys-72, and Cys-148-Cys-151.

It belongs to the ARMET family.

Its subcellular location is the secreted. Required during the maturation of the embryonic nervous system for maintenance of neuronal and cuticular connectivity. Essential for maintenance of dopaminergic neurons and dopamine levels. This Drosophila ananassae (Fruit fly) protein is Mesencephalic astrocyte-derived neurotrophic factor homolog.